Consider the following 221-residue polypeptide: Catechol O-methyltransferase (221 aa).

Valine 41, glycine 65, leucine 67, serine 71, glutamate 89, histidine 94, alanine 118, and aspartate 139 together coordinate S-adenosyl-L-methionine. Mg(2+) contacts are provided by aspartate 139, aspartate 165, and asparagine 166.

This sequence belongs to the class I-like SAM-binding methyltransferase superfamily. Cation-dependent O-methyltransferase family. In terms of assembly, homodimer. Mg(2+) is required as a cofactor.

The enzyme catalyses a catechol + S-adenosyl-L-methionine = a guaiacol + S-adenosyl-L-homocysteine + H(+). The metal ion affects the meta and para-regiospecificity of the enzyme as well as the enzyme activity and thermal stability. Catechol O-methyltransferase that can use various catechol-like compounds. Can produce vanillic acid (meta-form) and iso-vanillic acid (para-form) from protocatechuic acid (PCA). Does not have a regiospecificity, and produces the meta- and para-forms of the products in equal proportion. In Niastella koreensis (strain DSM 17620 / KACC 11465 / NBRC 106392 / GR20-10), this protein is Catechol O-methyltransferase.